Reading from the N-terminus, the 199-residue chain is NAD(P)H dehydrogenase (quinone) (199 aa).

In terms of domain architecture, Flavodoxin-like spans 4-190 (VLVLYYSAYG…DAARFQGAHV (187 aa)). FMN contacts are provided by residues 10–15 (SAYGHI) and 78–80 (TRY). Y12 provides a ligand contact to NAD(+). W98 contributes to the substrate binding site. FMN-binding positions include 113–119 (SSATQHG) and H134.

It belongs to the WrbA family. It depends on FMN as a cofactor.

It carries out the reaction a quinone + NADH + H(+) = a quinol + NAD(+). It catalyses the reaction a quinone + NADPH + H(+) = a quinol + NADP(+). The protein is NAD(P)H dehydrogenase (quinone) of Sinorhizobium fredii (strain NBRC 101917 / NGR234).